Here is a 45-residue protein sequence, read N- to C-terminus: Large ribosomal subunit protein bL34 (45 aa).

The protein belongs to the bacterial ribosomal protein bL34 family.

This Leifsonia xyli subsp. xyli (strain CTCB07) protein is Large ribosomal subunit protein bL34.